Reading from the N-terminus, the 827-residue chain is Cytosolic Fe-S cluster assembly factor NAR1 (827 aa).

[4Fe-4S] cluster is bound at residue Cys-22. The interval 57-77 (AYYESSTPPSSSLSAADSRPR) is disordered. The segment covering 61–73 (SSTPPSSSLSAAD) has biased composition (low complexity). The [4Fe-4S] cluster site is built by Cys-92, Cys-95, and Cys-98. Residues 209-231 (RENARKRAKLSNAPADDDDRLHP) form a disordered region. Positions 246, 307, 591, and 595 each coordinate [4Fe-4S] cluster. Disordered stretches follow at residues 599-637 (GGQI…WAAD) and 709-739 (DQGG…NAKS). Composition is skewed to polar residues over residues 604 to 621 (PPTQ…TVDN) and 713 to 738 (ANDS…SNAK).

The protein belongs to the NARF family.

Component of the cytosolic Fe/S protein assembly machinery. Required for maturation of extramitochondrial Fe/S proteins. May play a role in the transfer of pre-assembled Fe/S clusters to target apoproteins. The protein is Cytosolic Fe-S cluster assembly factor NAR1 (NAR1) of Mycosarcoma maydis (Corn smut fungus).